The following is a 179-amino-acid chain: Protein GrpE (179 aa).

The interval 1–22 (MTDNNIENNEEEIRKAPSANDR) is disordered. Over residues 11–22 (EEIRKAPSANDR) the composition is skewed to basic and acidic residues.

Belongs to the GrpE family. As to quaternary structure, homodimer.

Its subcellular location is the cytoplasm. Its function is as follows. Participates actively in the response to hyperosmotic and heat shock by preventing the aggregation of stress-denatured proteins, in association with DnaK and GrpE. It is the nucleotide exchange factor for DnaK and may function as a thermosensor. Unfolded proteins bind initially to DnaJ; upon interaction with the DnaJ-bound protein, DnaK hydrolyzes its bound ATP, resulting in the formation of a stable complex. GrpE releases ADP from DnaK; ATP binding to DnaK triggers the release of the substrate protein, thus completing the reaction cycle. Several rounds of ATP-dependent interactions between DnaJ, DnaK and GrpE are required for fully efficient folding. This chain is Protein GrpE, found in Rickettsia canadensis (strain McKiel).